Here is a 401-residue protein sequence, read N- to C-terminus: 8-amino-7-oxononanoate synthase (401 aa).

Residue Arg-24 participates in substrate binding. Pyridoxal 5'-phosphate is bound at residue 111–112 (GF). Residue His-137 participates in substrate binding. Residues Ser-183, His-211, and Thr-240 each coordinate pyridoxal 5'-phosphate. N6-(pyridoxal phosphate)lysine is present on Lys-243. Thr-357 is a binding site for substrate.

Belongs to the class-II pyridoxal-phosphate-dependent aminotransferase family. BioF subfamily. In terms of assembly, homodimer. Requires pyridoxal 5'-phosphate as cofactor.

It carries out the reaction 6-carboxyhexanoyl-[ACP] + L-alanine + H(+) = (8S)-8-amino-7-oxononanoate + holo-[ACP] + CO2. It participates in cofactor biosynthesis; biotin biosynthesis. Catalyzes the decarboxylative condensation of pimeloyl-[acyl-carrier protein] and L-alanine to produce 8-amino-7-oxononanoate (AON), [acyl-carrier protein], and carbon dioxide. In Xanthomonas campestris pv. campestris (strain B100), this protein is 8-amino-7-oxononanoate synthase.